The following is a 339-amino-acid chain: Bifunctional NMN adenylyltransferase/Nudix hydrolase (339 aa).

The interval 1–183 is NMN adenylyltransferase; sequence MQTKYQYGIY…RYIALCDEYQ (183 aa). Residues 199–335 enclose the Nudix hydrolase domain; the sequence is PTFITTDAVV…EDHFQIIQHF (137 aa). Residues 233 to 254 carry the Nudix box motif; that stretch reads GFIKQNETLVEGMLRELKEETR.

In the N-terminal section; belongs to the archaeal NMN adenylyltransferase family. The cofactor is Mg(2+). Requires Mn(2+) as cofactor.

The protein resides in the cytoplasm. It catalyses the reaction beta-nicotinamide D-ribonucleotide + ATP + H(+) = diphosphate + NAD(+). It functions in the pathway cofactor biosynthesis; NAD(+) biosynthesis; NAD(+) from nicotinamide D-ribonucleotide: step 1/1. Functionally, the Nudix hydrolase domain is active on ADP-ribose, (2')-phospho-ADP-ribose, IDP-ribose and NADPH. The polypeptide is Bifunctional NMN adenylyltransferase/Nudix hydrolase (Synechocystis sp. (strain ATCC 27184 / PCC 6803 / Kazusa)).